The chain runs to 64 residues: uncharacterized protein (64 aa).

This is an uncharacterized protein from Archaeoglobus fulgidus (strain ATCC 49558 / DSM 4304 / JCM 9628 / NBRC 100126 / VC-16).